Reading from the N-terminus, the 441-residue chain is UDP-N-acetylglucosamine--N-acetylmuramyl-(pentapeptide) pyrophosphoryl-undecaprenol N-acetylglucosamine transferase (441 aa).

UDP-N-acetyl-alpha-D-glucosamine-binding positions include 28 to 30, N140, R176, S204, I257, and Q302; that span reads TGG.

It belongs to the glycosyltransferase 28 family. MurG subfamily.

The protein localises to the cell inner membrane. It carries out the reaction di-trans,octa-cis-undecaprenyl diphospho-N-acetyl-alpha-D-muramoyl-L-alanyl-D-glutamyl-meso-2,6-diaminopimeloyl-D-alanyl-D-alanine + UDP-N-acetyl-alpha-D-glucosamine = di-trans,octa-cis-undecaprenyl diphospho-[N-acetyl-alpha-D-glucosaminyl-(1-&gt;4)]-N-acetyl-alpha-D-muramoyl-L-alanyl-D-glutamyl-meso-2,6-diaminopimeloyl-D-alanyl-D-alanine + UDP + H(+). Its pathway is cell wall biogenesis; peptidoglycan biosynthesis. Cell wall formation. Catalyzes the transfer of a GlcNAc subunit on undecaprenyl-pyrophosphoryl-MurNAc-pentapeptide (lipid intermediate I) to form undecaprenyl-pyrophosphoryl-MurNAc-(pentapeptide)GlcNAc (lipid intermediate II). This is UDP-N-acetylglucosamine--N-acetylmuramyl-(pentapeptide) pyrophosphoryl-undecaprenol N-acetylglucosamine transferase from Xanthomonas oryzae pv. oryzae (strain MAFF 311018).